The following is a 98-amino-acid chain: EKC/KEOPS complex subunit GON7 (98 aa).

Met-1 carries the N-acetylmethionine modification. The tract at residues 55-98 (DAQGLAEDPDDALDGDDEDDAEDENNSGRTNSDGPSAKRPKPAS) is disordered. The span at 61 to 79 (EDPDDALDGDDEDDAEDEN) shows a compositional bias: acidic residues.

In terms of assembly, component of the EKC/KEOPS complex composed of at least GON7, TP53RK, TPRKB, OSGEP and LAGE3; the whole complex dimerizes.

The protein localises to the nucleus. Component of the EKC/KEOPS complex that is required for the formation of a threonylcarbamoyl group on adenosine at position 37 (t(6)A37) in tRNAs that read codons beginning with adenine. The complex is probably involved in the transfer of the threonylcarbamoyl moiety of threonylcarbamoyl-AMP (TC-AMP) to the N6 group of A37. GON7 plays a supporting role to the catalytic subunit OSGEP in the complex. This chain is EKC/KEOPS complex subunit GON7, found in Mus musculus (Mouse).